A 356-amino-acid polypeptide reads, in one-letter code: Glutamine synthetase (356 aa).

Residues 26–105 (IMAEYVWVDA…VLAECWNAGG (80 aa)) enclose the GS beta-grasp domain. The 245-residue stretch at 112 to 356 (FRHDCVKVMD…TKALLQFSLA (245 aa)) folds into the GS catalytic domain.

The protein belongs to the glutamine synthetase family. Homooctamer.

The protein localises to the cytoplasm. It carries out the reaction L-glutamate + NH4(+) + ATP = L-glutamine + ADP + phosphate + H(+). This chain is Glutamine synthetase (GLN1), found in Fusarium solani subsp. phaseoli (Nectria haematococca).